The primary structure comprises 476 residues: Riboflavin transporter rft-2 (476 aa).

Residues 1–21 form a helical membrane-spanning segment; it reads MGCSAATFILVALFGSSSWMG. The Cytoplasmic segment spans residues 22 to 41; that stretch reads TNSVWMQLPLLTSELPEQWN. The chain crosses the membrane as a helical span at residues 42 to 62; the sequence is LPSYLAGVVQIACIVPLIYTI. Over 63-75 the chain is Extracellular; that stretch reads LHKGVKSFTIPTA. The chain crosses the membrane as a helical span at residues 76 to 96; the sequence is PLIIALLSLACCCQLGLSFFW. Residues 97–113 lie on the Cytoplasmic side of the membrane; that stretch reads SDYSEIFGAPRSWPLYS. The chain crosses the membrane as a helical span at residues 114 to 134; sequence LLFGLAIVNAMSNVLFMPFMA. The Extracellular segment spans residues 135–140; it reads QFHPAY. The helical transmembrane segment at 141–161 threads the bilayer; sequence LNAYFVGMGLSSLAPSLLSLA. The Cytoplasmic segment spans residues 162 to 185; the sequence is QGTSMFKCDEKGVAERFPPNFSVS. The helical transmembrane segment at 186 to 206 threads the bilayer; that stretch reads IFFFVIFSFTCVALFAFIALY. The Extracellular segment spans residues 207-306; the sequence is RSGAHTHFAT…HPVDYITGVK (100 aa). The tract at residues 215 to 249 is disordered; that stretch reads ATPNKKEPNEGTPLKKDLNNTSSSRKGDDEDESPI. Residues 218–232 are compositionally biased toward basic and acidic residues; that stretch reads NKKEPNEGTPLKKDL. Asparagine 233 is a glycosylation site (N-linked (GlcNAc...) asparagine). The chain crosses the membrane as a helical span at residues 307–327; sequence FTFLLFTTALVNAQMNGIITS. Residues 328–342 lie on the Cytoplasmic side of the membrane; the sequence is VQSYAALPYSQATYH. The helical transmembrane segment at 343–363 threads the bilayer; the sequence is FAVTLSNVVSPLSSFLPFFIS. Residues 364–366 lie on the Extracellular side of the membrane; it reads VRS. Residues 367–387 form a helical membrane-spanning segment; that stretch reads IPVLAILTACSTAMTAFIVYL. Residues 388–393 lie on the Cytoplasmic side of the membrane; that stretch reads AALSPN. Residues 394-414 form a helical membrane-spanning segment; it reads LIFNSVTIGSALSIGGSLIAA. Topologically, residues 415 to 437 are extracellular; it reads GLHSYLRVVFASLLREGHQSESR. A helical transmembrane segment spans residues 438 to 458; that stretch reads LFWCGVFIQIGSFIGSAVMFP. At 459 to 476 the chain is on the cytoplasmic side; it reads LVNIAHLFTSAPQCKSIS.

This sequence belongs to the riboflavin transporter family. In terms of tissue distribution, expressed in intestine and pharynx.

The protein localises to the cell membrane. The catalysed reaction is riboflavin(in) = riboflavin(out). Riboflavin transporter. The protein is Riboflavin transporter rft-2 of Caenorhabditis elegans.